The chain runs to 49 residues: Large ribosomal subunit protein bL33 (49 aa).

It belongs to the bacterial ribosomal protein bL33 family.

The polypeptide is Large ribosomal subunit protein bL33 (Lactiplantibacillus plantarum (strain ATCC BAA-793 / NCIMB 8826 / WCFS1) (Lactobacillus plantarum)).